The chain runs to 405 residues: L-carnitine CoA-transferase (405 aa).

CoA-binding residues include K97 and R104. The active-site Nucleophile is the D169.

It belongs to the CoA-transferase III family. CaiB subfamily. In terms of assembly, homodimer.

The protein resides in the cytoplasm. The catalysed reaction is crotonobetainyl-CoA + (R)-carnitine = crotonobetaine + (R)-carnitinyl-CoA. It catalyses the reaction 4-(trimethylamino)butanoyl-CoA + (R)-carnitine = (R)-carnitinyl-CoA + 4-(trimethylamino)butanoate. It functions in the pathway amine and polyamine metabolism; carnitine metabolism. Catalyzes the reversible transfer of the CoA moiety from gamma-butyrobetainyl-CoA to L-carnitine to generate L-carnitinyl-CoA and gamma-butyrobetaine. Is also able to catalyze the reversible transfer of the CoA moiety from gamma-butyrobetainyl-CoA or L-carnitinyl-CoA to crotonobetaine to generate crotonobetainyl-CoA. In Escherichia coli O139:H28 (strain E24377A / ETEC), this protein is L-carnitine CoA-transferase.